The sequence spans 368 residues: CST complex subunit STN1 (368 aa).

An interaction with CTC1 region spans residues 1-185 (MQPGSSRCEE…KVYDQPFHSS (185 aa)). The segment at residues 57–155 (VDVLGTVIGV…EIHATTYYKV (99 aa)) is a DNA-binding region (OB). Winged helix-turn-helix (wHTH) stretches follow at residues 191 to 295 (EALS…YVTR) and 296 to 368 (EDKD…YTAF).

The protein belongs to the STN1 family. In terms of assembly, component of the CST complex, composed of TEN1/C17orf106, CTC1/C17orf68 and STN1; in the complex interacts directly with TEN1 and CTC1. Interacts with ACD/TPP1, POT1 and POLA1.

The protein resides in the nucleus. The protein localises to the chromosome. It is found in the telomere. Its function is as follows. Component of the CST complex proposed to act as a specialized replication factor promoting DNA replication under conditions of replication stress or natural replication barriers such as the telomere duplex. The CST complex binds single-stranded DNA with high affinity in a sequence-independent manner, while isolated subunits bind DNA with low affinity by themselves. Initially the CST complex has been proposed to protect telomeres from DNA degradation. However, the CST complex has been shown to be involved in several aspects of telomere replication. The CST complex inhibits telomerase and is involved in telomere length homeostasis; it is proposed to bind to newly telomerase-synthesized 3' overhangs and to terminate telomerase action implicating the association with the ACD:POT1 complex thus interfering with its telomerase stimulation activity. The CST complex is also proposed to be involved in fill-in synthesis of the telomeric C-strand probably implicating recruitment and activation of DNA polymerase alpha. The CST complex facilitates recovery from many forms of exogenous DNA damage; seems to be involved in the re-initiation of DNA replication at repaired forks and/or dormant origins. Required for efficicient replication of the duplex region of the telomere. Promotes efficient replication of lagging-strand telomeres. Promotes general replication start following replication-fork stalling implicating new origin firing. May be in involved in C-strand fill-in during late S/G2 phase independent of its role in telomere duplex replication. Functionally, component of the CST complex, a complex that binds to single-stranded DNA and is required to protect telomeres from DNA degradation. The CST complex binds single-stranded DNA with high affinity in a sequence-independent manner, while isolated subunits bind DNA with low affinity by themselves. In addition to telomere protection, the CST complex has probably a more general role in DNA metabolism at non-telomeric sites. The chain is CST complex subunit STN1 from Homo sapiens (Human).